The chain runs to 639 residues: Threonine--tRNA ligase (639 aa).

One can recognise a TGS domain in the interval 1 to 61; the sequence is MATVRLPDGK…DGGGELEFVT (61 aa). A catalytic region spans residues 239–536; that stretch reads DHRRLGRELG…LIEHYAGAFP (298 aa). 3 residues coordinate Zn(2+): cysteine 333, histidine 384, and histidine 513.

It belongs to the class-II aminoacyl-tRNA synthetase family. In terms of assembly, homodimer. The cofactor is Zn(2+).

Its subcellular location is the cytoplasm. It carries out the reaction tRNA(Thr) + L-threonine + ATP = L-threonyl-tRNA(Thr) + AMP + diphosphate + H(+). In terms of biological role, catalyzes the attachment of threonine to tRNA(Thr) in a two-step reaction: L-threonine is first activated by ATP to form Thr-AMP and then transferred to the acceptor end of tRNA(Thr). Also edits incorrectly charged L-seryl-tRNA(Thr). This Rubrobacter xylanophilus (strain DSM 9941 / JCM 11954 / NBRC 16129 / PRD-1) protein is Threonine--tRNA ligase.